A 213-amino-acid polypeptide reads, in one-letter code: Protein FAM177A1 (213 aa).

N-acetylmethionine is present on methionine 1. Serine 70 carries the post-translational modification Phosphoserine. Phosphothreonine is present on threonine 71. A coiled-coil region spans residues 136-173 (IDEYYRMKKEEEEEEEENRMSEEAEKQYQQNKLQTDSI). Residues 147 to 175 (EEEEEENRMSEEAEKQYQQNKLQTDSIVQ) are disordered. The segment covering 162–175 (QYQQNKLQTDSIVQ) has biased composition (polar residues).

Belongs to the FAM177 family.

The protein is Protein FAM177A1 (FAM177A1) of Homo sapiens (Human).